Here is a 68-residue protein sequence, read N- to C-terminus: Large ribosomal subunit protein bL31 (68 aa).

The Zn(2+) site is built by Cys16, Cys18, Cys37, and Cys40.

This sequence belongs to the bacterial ribosomal protein bL31 family. Type A subfamily. As to quaternary structure, part of the 50S ribosomal subunit. It depends on Zn(2+) as a cofactor.

Binds the 23S rRNA. This is Large ribosomal subunit protein bL31 from Aquifex aeolicus (strain VF5).